A 451-amino-acid polypeptide reads, in one-letter code: MSGAAAGGRGGGSWGPGRGGAGGLRRGCSPPAPAGSPRVGLQPLRATVPFQLQQPHQRRDGGGRAASVPCSVAPEKSVCRPQPPQVRRTFSLDTILSSYLLGQWPRDADGAFTCCTNDKATQTPLSWQEPEGERASFCMHKRSASWGSTDHRKEITKLKQQLQRTKLSRSGKEKERSCPVQGDHAALGAGRASLPSHPPGPPVLRLSPCLHRSLEGLNQELEEVFVKEQGEEELLRILEVPDGHRAPAPPQNSSCDHSLLLEPGNLTSSPSVPLASPQPPSQASREEHQGATEELASIHGNKASSPGNPAFLEDGSPSPVLAFAASPRPNHSYVFKREPPEGCERVRVFEEATSPGPDLAFLTSCPDKNKVHFNPTGSAFCPVSLIKPLFPSMGFIFRNCPSSPGSPLPTASPRAPRKGPEASKASSLPSEPWQRSPPSEESVLFQSSLVV.

The segment covering 1-25 has biased composition (gly residues); that stretch reads MSGAAAGGRGGGSWGPGRGGAGGLR. 2 disordered regions span residues 1 to 83 and 164 to 183; these read MSGA…RPQP and RTKLSRSGKEKERSCPVQGD. A phosphoserine mark is found at serine 29 and serine 67. Residues 149–175 are a coiled coil; it reads TDHRKEITKLKQQLQRTKLSRSGKEKE. Phosphoserine occurs at positions 193 and 213. The tract at residues 242–293 is disordered; it reads DGHRAPAPPQNSSCDHSLLLEPGNLTSSPSVPLASPQPPSQASREEHQGATE. Serine 318 and serine 326 each carry phosphoserine. Threonine 353 carries the post-translational modification Phosphothreonine. Residues 403 to 451 are disordered; that stretch reads SPGSPLPTASPRAPRKGPEASKASSLPSEPWQRSPPSEESVLFQSSLVV. A phosphoserine mark is found at serine 412 and serine 426. The span at 436–451 shows a compositional bias: polar residues; that stretch reads SPPSEESVLFQSSLVV.

It belongs to the FAM117 family.

The sequence is that of Protein FAM117A (Fam117a) from Mus musculus (Mouse).